Reading from the N-terminus, the 567-residue chain is Urease subunit alpha (567 aa).

The Urease domain maps to Gly-129–Phe-567. Residues His-134, His-136, and Lys-217 each contribute to the Ni(2+) site. Lys-217 bears the N6-carboxylysine mark. A substrate-binding site is contributed by His-219. Ni(2+) contacts are provided by His-246 and His-272. Catalysis depends on His-320, which acts as the Proton donor. A Ni(2+)-binding site is contributed by Asp-360.

This sequence belongs to the metallo-dependent hydrolases superfamily. Urease alpha subunit family. As to quaternary structure, heterotrimer of UreA (gamma), UreB (beta) and UreC (alpha) subunits. Three heterotrimers associate to form the active enzyme. It depends on Ni cation as a cofactor. In terms of processing, carboxylation allows a single lysine to coordinate two nickel ions.

The protein resides in the cytoplasm. The catalysed reaction is urea + 2 H2O + H(+) = hydrogencarbonate + 2 NH4(+). The protein operates within nitrogen metabolism; urea degradation; CO(2) and NH(3) from urea (urease route): step 1/1. This Pseudomonas putida (strain W619) protein is Urease subunit alpha.